The following is a 520-amino-acid chain: Putative tyrosine carboxypeptidase MATCAP2 (520 aa).

The tract at residues 116–153 is disordered; sequence EEKKYHSQKQSSSTYSKRCRKPSKSPNTSRSKDPRRMK. His331 contributes to the Zn(2+) binding site. The active-site Nucleophile is Glu332. Positions 336 and 367 each coordinate Zn(2+).

The cofactor is Zn(2+).

Functionally, putative tyrosine carboxypeptidase. This chain is Putative tyrosine carboxypeptidase MATCAP2, found in Homo sapiens (Human).